The sequence spans 336 residues: Anthranilate phosphoribosyltransferase (336 aa).

5-phospho-alpha-D-ribose 1-diphosphate-binding positions include Gly-82, 85-86, Thr-90, 92-95, 110-118, and Ser-122; these read GD, NIST, and KHGNRFASG. Gly-82 contacts anthranilate. Ser-94 contributes to the Mg(2+) binding site. Asn-113 contributes to the anthranilate binding site. Arg-168 contributes to the anthranilate binding site. The Mg(2+) site is built by Asp-227 and Glu-228.

Belongs to the anthranilate phosphoribosyltransferase family. Homodimer. Mg(2+) is required as a cofactor.

The catalysed reaction is N-(5-phospho-beta-D-ribosyl)anthranilate + diphosphate = 5-phospho-alpha-D-ribose 1-diphosphate + anthranilate. It participates in amino-acid biosynthesis; L-tryptophan biosynthesis; L-tryptophan from chorismate: step 2/5. Catalyzes the transfer of the phosphoribosyl group of 5-phosphorylribose-1-pyrophosphate (PRPP) to anthranilate to yield N-(5'-phosphoribosyl)-anthranilate (PRA). The protein is Anthranilate phosphoribosyltransferase of Desulfitobacterium hafniense (strain Y51).